Consider the following 504-residue polypeptide: PE-PGRS family protein PE_PGRS62 (504 aa).

The PE domain occupies 4 to 94 (VVTVPEAVAA…AAYLNTESAN (91 aa)).

It belongs to the mycobacterial PE family. PGRS subfamily. In terms of assembly, interacts with host Toll-like receptor 2 (TLR2).

Its subcellular location is the secreted. It is found in the cell wall. Its function is as follows. Supports mycobacterial virulence via inhibition of phagosome maturation and host inducible nitric oxide synthase (iNOS) expression. May promote the survival within macrophages by disturbing the cytokines profiles and blocking the endoplasmic reticulum (ER) stress-mediated apoptosis. May also affect bacterial cell wall composition. Expression in Mycobacterium smegmatis, a nonpathogenic species naturally deficient in PE_PGRS genes, results in enhanced resistance to various in vitro stresses. It also leads to phagosome maturation arrest and increased survival in macrophages. The protein is PE-PGRS family protein PE_PGRS62 of Mycobacterium tuberculosis (strain ATCC 25618 / H37Rv).